Here is a 148-residue protein sequence, read N- to C-terminus: Lysozyme C-1 (148 aa).

The signal sequence occupies residues 1-18 (MKALLVLGFLLLSASVQA). A C-type lysozyme domain is found at 19–148 (KIYERCQFAR…LSGYIRNCGV (130 aa)). Intrachain disulfides connect cysteine 24–cysteine 146, cysteine 48–cysteine 134, cysteine 83–cysteine 99, and cysteine 95–cysteine 113. Residues glutamate 53 and aspartate 71 contribute to the active site.

Belongs to the glycosyl hydrolase 22 family. Monomer. Expressed in lung, small intestine and spleen.

The protein localises to the secreted. It catalyses the reaction Hydrolysis of (1-&gt;4)-beta-linkages between N-acetylmuramic acid and N-acetyl-D-glucosamine residues in a peptidoglycan and between N-acetyl-D-glucosamine residues in chitodextrins.. Its function is as follows. Lysozymes have primarily a bacteriolytic function; those in tissues and body fluids are associated with the monocyte-macrophage system and enhance the activity of immunoagents. In the intestine they may also have a digestive function. The protein is Lysozyme C-1 (Lyz1) of Rattus norvegicus (Rat).